We begin with the raw amino-acid sequence, 891 residues long: Dynein axonemal intermediate chain 3 (891 aa).

A compositionally biased stretch (basic residues) spans 1–16; it reads MAPKQKKKSSRRKKSP. Residues 1–27 form a disordered region; that stretch reads MAPKQKKKSSRRKKSPKPILAASEDME. 4 WD repeats span residues 395–435, 477–533, 670–709, and 713–753; these read ESPD…DRIE, GHKR…PLTP, IHDG…GPLL, and CAPK…HEPA. Positions 817 to 861 form a coiled coil; it reads HLEYVEQRKKIREQEKKEMEQEMAKKKVKIYQKSKEQMEAELKMD.

As to quaternary structure, interacts with ACTR2; this interaction reduces binding of the Arp2/3 complex to the VCA domain of nucleation promoting factors. Part of the multisubunit axonemal dynein complex formed at least of two heavy chains and a number of intermediate and light chains. Found in a associated with the catalytic heavy chain DNAH2, the intermediate chain DNAI4, and the light chain DYNLT1.

It localises to the cytoplasm. Acts as a negative regulator of cell migration, invasion, and metastasis downstream of p53/TP53, through inhibition of Arp2/3 complex-mediated actin polymerization. Via its association with the multisubunit axonemal dynein complex, is potentially involved in the regulation of cilia function. May play a role in osteogenesis of dental tissue-derived mesenchymal stem cells. The polypeptide is Dynein axonemal intermediate chain 3 (DNAI3) (Macaca fascicularis (Crab-eating macaque)).